The following is a 456-amino-acid chain: tRNA-2-methylthio-N(6)-dimethylallyladenosine synthase (456 aa).

The MTTase N-terminal domain maps to 3–120 (KKVYVKTFGC…LPQMIDQRRA (118 aa)). Residues C12, C49, C83, C157, C161, and C164 each coordinate [4Fe-4S] cluster. The Radical SAM core domain occupies 143–377 (RIDGPSAFVS…QATIEENVQR (235 aa)). Residues 380–447 (QAMVGKVERI…PHSLRGELVM (68 aa)) form the TRAM domain.

It belongs to the methylthiotransferase family. MiaB subfamily. As to quaternary structure, monomer. It depends on [4Fe-4S] cluster as a cofactor.

The protein localises to the cytoplasm. It catalyses the reaction N(6)-dimethylallyladenosine(37) in tRNA + (sulfur carrier)-SH + AH2 + 2 S-adenosyl-L-methionine = 2-methylsulfanyl-N(6)-dimethylallyladenosine(37) in tRNA + (sulfur carrier)-H + 5'-deoxyadenosine + L-methionine + A + S-adenosyl-L-homocysteine + 2 H(+). Functionally, catalyzes the methylthiolation of N6-(dimethylallyl)adenosine (i(6)A), leading to the formation of 2-methylthio-N6-(dimethylallyl)adenosine (ms(2)i(6)A) at position 37 in tRNAs that read codons beginning with uridine. The protein is tRNA-2-methylthio-N(6)-dimethylallyladenosine synthase of Paraburkholderia phymatum (strain DSM 17167 / CIP 108236 / LMG 21445 / STM815) (Burkholderia phymatum).